Consider the following 177-residue polypeptide: ATP synthase subunit delta (177 aa).

It belongs to the ATPase delta chain family. In terms of assembly, F-type ATPases have 2 components, F(1) - the catalytic core - and F(0) - the membrane proton channel. F(1) has five subunits: alpha(3), beta(3), gamma(1), delta(1), epsilon(1). F(0) has three main subunits: a(1), b(2) and c(10-14). The alpha and beta chains form an alternating ring which encloses part of the gamma chain. F(1) is attached to F(0) by a central stalk formed by the gamma and epsilon chains, while a peripheral stalk is formed by the delta and b chains.

The protein resides in the cell inner membrane. F(1)F(0) ATP synthase produces ATP from ADP in the presence of a proton or sodium gradient. F-type ATPases consist of two structural domains, F(1) containing the extramembraneous catalytic core and F(0) containing the membrane proton channel, linked together by a central stalk and a peripheral stalk. During catalysis, ATP synthesis in the catalytic domain of F(1) is coupled via a rotary mechanism of the central stalk subunits to proton translocation. In terms of biological role, this protein is part of the stalk that links CF(0) to CF(1). It either transmits conformational changes from CF(0) to CF(1) or is implicated in proton conduction. The sequence is that of ATP synthase subunit delta from Pseudoalteromonas translucida (strain TAC 125).